Here is a 338-residue protein sequence, read N- to C-terminus: 5-dehydro-2-deoxygluconokinase (338 aa).

This sequence belongs to the carbohydrate kinase PfkB family.

The enzyme catalyses 5-dehydro-2-deoxy-D-gluconate + ATP = 6-phospho-5-dehydro-2-deoxy-D-gluconate + ADP + H(+). It functions in the pathway polyol metabolism; myo-inositol degradation into acetyl-CoA; acetyl-CoA from myo-inositol: step 5/7. Functionally, catalyzes the phosphorylation of 5-dehydro-2-deoxy-D-gluconate (2-deoxy-5-keto-D-gluconate or DKG) to 6-phospho-5-dehydro-2-deoxy-D-gluconate (DKGP). This chain is 5-dehydro-2-deoxygluconokinase, found in Mesomycoplasma hyopneumoniae (strain 232) (Mycoplasma hyopneumoniae).